The sequence spans 379 residues: Pathogen-associated molecular patterns-induced protein A70 (379 aa).

Residues 7 to 29 form a helical membrane-spanning segment; the sequence is VASFFTPTTLFLLLNLMIGTIVV. The N-linked (GlcNAc...) asparagine glycan is linked to asparagine 122. The tract at residues 133 to 154 is disordered; sequence TGSDPHSHSHSHLDLHPDPAPA. Residues 137 to 149 are compositionally biased toward basic and acidic residues; the sequence is PHSHSHSHLDLHP. Asparagine 170 carries N-linked (GlcNAc...) asparagine glycosylation. Disordered regions lie at residues 216–238 and 256–347; these read PEEDQPTGTGVNSQINPPGLTRA and SDPD…DGVD. Residues 221 to 231 show a composition bias toward polar residues; that stretch reads PTGTGVNSQIN. Composition is skewed to basic and acidic residues over residues 256–285 and 322–335; these read SDPDLDQKQNPDPVLHEEHKHVRSKSESKK and SLERRRPDTTRVER.

The protein localises to the membrane. The protein is Pathogen-associated molecular patterns-induced protein A70 of Arabidopsis thaliana (Mouse-ear cress).